Consider the following 258-residue polypeptide: Thyroxine 5-deiodinase (258 aa).

The chain crosses the membrane as a helical; Signal-anchor for type II membrane protein span at residues 1-20 (AACILLFPRFLLTAVMLWLL). At 21–258 (DFLCIRKKML…QSPGAVVIQV (238 aa)) the chain is on the extracellular side. Residue U122 is part of the active site. U122 is a non-standard amino acid (selenocysteine).

Belongs to the iodothyronine deiodinase family. As to quaternary structure, monomer. Homodimer. May undergo minor heretodimerization with DIO1 and DIO2.

It is found in the cell membrane. The protein localises to the endosome membrane. It carries out the reaction 3,3',5'-triiodo-L-thyronine + iodide + A + H(+) = L-thyroxine + AH2. The enzyme catalyses 3,3'-diiodo-L-thyronine + iodide + A + H(+) = 3,3',5-triiodo-L-thyronine + AH2. It catalyses the reaction 3-iodo-L-thyronine + iodide + A + H(+) = 3,5-diiodo-L-thyronine + AH2. The catalysed reaction is L-thyronine + iodide + A + H(+) = 3-iodo-L-thyronine + AH2. It carries out the reaction 3',5'-diiodo-L-thyronine + iodide + A + H(+) = 3,3',5'-triiodo-L-thyronine + AH2. The enzyme catalyses 3'-iodo-L-thyronine + iodide + A + H(+) = 3,3'-diiodo-L-thyronine + AH2. It catalyses the reaction 3,3',5'-triiodothyronamine + iodide + A + H(+) = 3,3',5,5'-tetraiodothyronamine + AH2. The catalysed reaction is 3',5'-diiodothyronamine + iodide + A + H(+) = 3,3',5'-triiodothyronamine + AH2. It carries out the reaction 3,3'-diiodothyronamine + iodide + A + H(+) = 3,3',5-triiodothyronamine + AH2. The enzyme catalyses 3-iodothyronamine + iodide + A + H(+) = 3,5-diiodothyronamine + AH2. It catalyses the reaction 3'-iodothyronamine + iodide + A + H(+) = 3,3'-diiodothyronamine + AH2. The catalysed reaction is thyronamine + iodide + A + H(+) = 3-iodothyronamine + AH2. Functionally, plays a crucial role in the metabolism of thyroid hormones (TH) and has specific roles in TH activation and inactivation by deiodination. Catalyzes the deiodination of L-thyroxine (T4) to 3,3',5'-triiodothyronine (rT3) and 3,5,3'-triiodothyronine (T3) to 3,3'-diiodothyronine (3,3'-T2) via inner-ring deiodination (IRD). Catalyzes the deiodination of rT3 to 3',5'-diiodothyronine (3',5'-T2), 3,3'-T2 to 3'-monoiodothyronine (3'-T1) and 3,5-diiodothyronine (3,5-T2) to 3-monoiodothyronine (3-T1) via IRD. Catalyzes the deiodination of 3-T1 to L-thyronine (T0) via outer-ring deiodination (ORD). Catalyzes the tyrosyl ring deiodinations of 3,3',5,5'-tetraiodothyronamine, 3,3',5'-triiodothyronamine, 3,5,3'-triiodothyronamine, 3,5-diiodothyronamine, 3,3'-diiodothyronamine and 3-iodothyronamine. In Gallus gallus (Chicken), this protein is Thyroxine 5-deiodinase (DIO3).